The sequence spans 1072 residues: Carbamoyl phosphate synthase large chain (1072 aa).

The carboxyphosphate synthetic domain stretch occupies residues 1–401 (MPKRLDINTI…SLLKAVRSLE (401 aa)). Arg129, Arg169, Gly175, Gly176, Lys208, Ile210, Glu215, Gly241, Val242, His243, Gln284, and Glu298 together coordinate ATP. In terms of domain architecture, ATP-grasp 1 spans 133–327 (RTLMQELNEP…IAKLAAKIAV (195 aa)). Positions 284, 298, and 300 each coordinate Mg(2+). Mn(2+) is bound by residues Gln284, Glu298, and Asn300. Residues 402–546 (LGVYHLELEH…YSTYGDENES (145 aa)) are oligomerization domain. Residues 547 to 929 (VRTDRKSVVV…ALYKGLVASG (383 aa)) are carbamoyl phosphate synthetic domain. Residues 671 to 861 (EAALTQLGIP…MANVATKVIL (191 aa)) form the ATP-grasp 2 domain. The ATP site is built by Arg707, Arg746, Glu752, Gly777, Val778, His779, Ser780, Gln820, and Glu832. Residues Gln820, Glu832, and Asn834 each contribute to the Mg(2+) site. 3 residues coordinate Mn(2+): Gln820, Glu832, and Asn834. In terms of domain architecture, MGS-like spans 930 to 1072 (INIPTHGSVI…QTKRHEVVHA (143 aa)). An allosteric domain region spans residues 930–1072 (INIPTHGSVI…QTKRHEVVHA (143 aa)).

This sequence belongs to the CarB family. Composed of two chains; the small (or glutamine) chain promotes the hydrolysis of glutamine to ammonia, which is used by the large (or ammonia) chain to synthesize carbamoyl phosphate. Tetramer of heterodimers (alpha,beta)4. The cofactor is Mg(2+). Requires Mn(2+) as cofactor.

The catalysed reaction is hydrogencarbonate + L-glutamine + 2 ATP + H2O = carbamoyl phosphate + L-glutamate + 2 ADP + phosphate + 2 H(+). It carries out the reaction hydrogencarbonate + NH4(+) + 2 ATP = carbamoyl phosphate + 2 ADP + phosphate + 2 H(+). It participates in amino-acid biosynthesis; L-arginine biosynthesis; carbamoyl phosphate from bicarbonate: step 1/1. Its pathway is pyrimidine metabolism; UMP biosynthesis via de novo pathway; (S)-dihydroorotate from bicarbonate: step 1/3. Large subunit of the glutamine-dependent carbamoyl phosphate synthetase (CPSase). CPSase catalyzes the formation of carbamoyl phosphate from the ammonia moiety of glutamine, carbonate, and phosphate donated by ATP, constituting the first step of 2 biosynthetic pathways, one leading to arginine and/or urea and the other to pyrimidine nucleotides. The large subunit (synthetase) binds the substrates ammonia (free or transferred from glutamine from the small subunit), hydrogencarbonate and ATP and carries out an ATP-coupled ligase reaction, activating hydrogencarbonate by forming carboxy phosphate which reacts with ammonia to form carbamoyl phosphate. The sequence is that of Carbamoyl phosphate synthase large chain from Bacillus cereus (strain G9842).